A 242-amino-acid polypeptide reads, in one-letter code: Myogenic factor 6 (242 aa).

The tract at residues 31–63 (SPLYPGSDGTLSPCQDQMPPEAGSDSSGEEHVL) is disordered. A bHLH domain is found at 93 to 144 (DRRKAATLRERRRLKKINEAFEALKRRTVANPNQRLPKVEILRSAINYIERL).

As to quaternary structure, efficient DNA binding requires dimerization with another bHLH protein.

It is found in the nucleus. Functionally, involved in muscle differentiation (myogenic factor). Induces fibroblasts to differentiate into myoblasts. Probable sequence specific DNA-binding protein. This is Myogenic factor 6 (MYF6) from Sus scrofa (Pig).